A 424-amino-acid chain; its full sequence is MPLLWLRGFLLASCWIIVRSSPTPGSGGHSAAPDCPSCALATLPKDVPNSQPEMVEAVKKHILNMLHLKKRPDVTQPVPKAALLNAIRKLHVGKVGENGYVELEDDIGRRAEMNELMEQTSEIITFAEAGTARKTLRFEISKEGSDLSVVERAEIWLFLKVPKANRTRTKVSIRLFQQQRRPQGSADAGEEAEDVGFPEEKSEVLISEKVVDARKSTWHIFPVSSSIQRLLDQGKSALDIRTACEQCHETGASLVLLGKKKKKEEEAEGRKRDGEGAGVDEEKEQSHRPFLMLQARQSEEHPHRRRRRGLECDGKVNICCKKQFFVSFKDIGWNDWIIAPSGYHANYCEGECPSHIAGTSGSSLSFHSTVINHYRMRGHSPFANLKSCCVPTKLRPMSMLYYDDGQNIIKKDIQNMIVEECGCS.

A signal peptide spans 1 to 20; sequence MPLLWLRGFLLASCWIIVRS. Residues 21 to 308 constitute a propeptide that is removed on maturation; the sequence is SPTPGSGGHS…EEHPHRRRRR (288 aa). Asn-165 carries an N-linked (GlcNAc...) asparagine glycan. Disordered stretches follow at residues 178 to 197 and 259 to 306; these read QQRR…DVGF and KKKK…HRRR. A compositionally biased stretch (acidic residues) spans 188–197; it reads AGEEAEDVGF. Over residues 263–275 the composition is skewed to basic and acidic residues; that stretch reads KEEEAEGRKRDGE. Cystine bridges form between Cys-312-Cys-320, Cys-319-Cys-389, Cys-348-Cys-421, and Cys-352-Cys-423.

The protein belongs to the TGF-beta family. In terms of assembly, dimeric, linked by one or more disulfide bonds. Inhibin A is a dimer of alpha/INHA and beta-A/INHBA. Activin A is a homodimer of beta-A/INHBA. Activin AB is a dimer of beta-A/INHBA and beta-B/INHBB. Interacts with FST and FSTL3; these interactions prevent activin A interaction to its type II receptor. Activin A interacts with ACVR2A. Activin A interacts with BMPR2. Inhibin A interacts with ACVR1; this interaction creates a non-signaling complex (NSC) that inhibits ACVR1-mediated BMP signaling. Inhibin A interacts with ACVR2A.

Its subcellular location is the secreted. In terms of biological role, inhibins/activins are involved in regulating a number of diverse functions such as hypothalamic and pituitary hormone secretion, gonadal hormone secretion, germ cell development and maturation, erythroid differentiation, insulin secretion, nerve cell survival, embryonic axial development or bone growth, depending on their subunit composition. Functionally, activin A is a homodimer of INHBA that plays a role in several essential biological processes including embryonic development, stem cell maintenance and differentiation, haematopoiesis, cell proliferation and tissue fibrosis. Signals through type I (such as ACVR1B or ACVR1C) and type II receptors (such as ACVR2A, ACVR2B or BMPR2) which, upon ligand binding, phosphorylate SMAD2 and SMAD3 intracellular signaling mediators that form a complex with SMAD4, translocate to the nucleus and modulate gene expression. Can also activate alternative non-canonical intracellular signaling pathways including the p38 MAPK, extracellular signal-regulated kinases 1/2 (ERK1/2) and c-Jun N-terminal kinases (JNKs) to modulate cell migration and differentiation. Alternatively, promotes osteoblastic differentiation via ACVRL1-SMAD1/5/9 pathway. In addition, can engage the type I receptor ACVR1 to form an ACVR1-activin A-type II receptor non-signaling complex (NSC) that renders receptors unavailable for engagement with BMPs, hence resulting in an apparent inhibition of ACVR1-mediated BMP signaling. Inhibin A is a dimer of alpha/INHA and beta-A/INHBA that functions as a feedback regulator in the hypothalamic-pituitary-gonadal (HPG) axis. Inhibits the secretion of FSH from the anterior pituitary gland by acting on pituitary gonadotrope cells. Antagonizes activin A by binding to the proteoglycan, betaglycan, and forming a stable complex with and, thereby, sequestering type II activin receptors while excluding type I receptor. The polypeptide is Inhibin beta A chain (INHBA) (Sus scrofa (Pig)).